The primary structure comprises 725 residues: Phosphoribosylformylglycinamidine synthase subunit PurL (725 aa).

Residue H41 is part of the active site. 2 residues coordinate ATP: Y44 and K83. E85 is a Mg(2+) binding site. Substrate contacts are provided by residues 86–89 (SHNH) and R108. The Proton acceptor role is filled by H87. D109 is a binding site for Mg(2+). Residue Q231 participates in substrate binding. D259 is a binding site for Mg(2+). Residue 303-305 (ESQ) participates in substrate binding. ATP contacts are provided by D485 and G522. Residue N523 participates in Mg(2+) binding. Residue S525 coordinates substrate.

The protein belongs to the FGAMS family. Monomer. Part of the FGAM synthase complex composed of 1 PurL, 1 PurQ and 2 PurS subunits.

It is found in the cytoplasm. The enzyme catalyses N(2)-formyl-N(1)-(5-phospho-beta-D-ribosyl)glycinamide + L-glutamine + ATP + H2O = 2-formamido-N(1)-(5-O-phospho-beta-D-ribosyl)acetamidine + L-glutamate + ADP + phosphate + H(+). Its pathway is purine metabolism; IMP biosynthesis via de novo pathway; 5-amino-1-(5-phospho-D-ribosyl)imidazole from N(2)-formyl-N(1)-(5-phospho-D-ribosyl)glycinamide: step 1/2. Its function is as follows. Part of the phosphoribosylformylglycinamidine synthase complex involved in the purines biosynthetic pathway. Catalyzes the ATP-dependent conversion of formylglycinamide ribonucleotide (FGAR) and glutamine to yield formylglycinamidine ribonucleotide (FGAM) and glutamate. The FGAM synthase complex is composed of three subunits. PurQ produces an ammonia molecule by converting glutamine to glutamate. PurL transfers the ammonia molecule to FGAR to form FGAM in an ATP-dependent manner. PurS interacts with PurQ and PurL and is thought to assist in the transfer of the ammonia molecule from PurQ to PurL. This is Phosphoribosylformylglycinamidine synthase subunit PurL from Thermus thermophilus (strain ATCC BAA-163 / DSM 7039 / HB27).